The following is a 47-amino-acid chain: MKKITGIILLLLAVIILAACQANYIRDVQGGTVSPSSTAEVTGLATQ.

Positions 1 to 19 are cleaved as a signal peptide; it reads MKKITGIILLLLAVIILAA. The N-palmitoyl cysteine moiety is linked to residue C20. C20 carries S-diacylglycerol cysteine lipidation.

Its subcellular location is the cell outer membrane. Lysis proteins are required for both colicin release and partial cell lysis. The polypeptide is Lysis protein for colicin E8 (lys) (Escherichia coli).